Reading from the N-terminus, the 180-residue chain is Segregation and condensation protein B (180 aa).

Belongs to the ScpB family. Homodimer. Homodimerization may be required to stabilize the binding of ScpA to the Smc head domains. Component of a cohesin-like complex composed of ScpA, ScpB and the Smc homodimer, in which ScpA and ScpB bind to the head domain of Smc. The presence of the three proteins is required for the association of the complex with DNA.

The protein resides in the cytoplasm. Functionally, participates in chromosomal partition during cell division. May act via the formation of a condensin-like complex containing Smc and ScpA that pull DNA away from mid-cell into both cell halves. This Staphylococcus epidermidis (strain ATCC 35984 / DSM 28319 / BCRC 17069 / CCUG 31568 / BM 3577 / RP62A) protein is Segregation and condensation protein B.